The sequence spans 123 residues: Large ribosomal subunit protein bL12 (123 aa).

It belongs to the bacterial ribosomal protein bL12 family. As to quaternary structure, homodimer. Part of the ribosomal stalk of the 50S ribosomal subunit. Forms a multimeric L10(L12)X complex, where L10 forms an elongated spine to which 2 to 4 L12 dimers bind in a sequential fashion. Binds GTP-bound translation factors.

Its function is as follows. Forms part of the ribosomal stalk which helps the ribosome interact with GTP-bound translation factors. Is thus essential for accurate translation. The sequence is that of Large ribosomal subunit protein bL12 from Desulfotalea psychrophila (strain LSv54 / DSM 12343).